A 72-amino-acid polypeptide reads, in one-letter code: ATP-dependent Clp protease ATP-binding subunit ClpA homolog (72 aa).

Belongs to the ClpA/ClpB family.

Its subcellular location is the plastid. The protein resides in the chloroplast. May interact with a ClpP-like protease involved in degradation of denatured proteins in the chloroplast. The protein is ATP-dependent Clp protease ATP-binding subunit ClpA homolog of Populus euphratica (Euphrates poplar).